A 284-amino-acid chain; its full sequence is Bifunctional protein FolD (284 aa).

NADP(+) contacts are provided by residues 165–167, S190, and I231; that span reads GRS.

This sequence belongs to the tetrahydrofolate dehydrogenase/cyclohydrolase family. As to quaternary structure, homodimer.

The enzyme catalyses (6R)-5,10-methylene-5,6,7,8-tetrahydrofolate + NADP(+) = (6R)-5,10-methenyltetrahydrofolate + NADPH. It carries out the reaction (6R)-5,10-methenyltetrahydrofolate + H2O = (6R)-10-formyltetrahydrofolate + H(+). It functions in the pathway one-carbon metabolism; tetrahydrofolate interconversion. In terms of biological role, catalyzes the oxidation of 5,10-methylenetetrahydrofolate to 5,10-methenyltetrahydrofolate and then the hydrolysis of 5,10-methenyltetrahydrofolate to 10-formyltetrahydrofolate. This Clostridium kluyveri (strain ATCC 8527 / DSM 555 / NBRC 12016 / NCIMB 10680 / K1) protein is Bifunctional protein FolD.